A 456-amino-acid polypeptide reads, in one-letter code: Zinc finger C2HC domain-containing protein 1C (456 aa).

Disordered stretches follow at residues Met16–Lys46 and Tyr85–Pro113. 2 stretches are compositionally biased toward polar residues: residues Tyr35–Lys46 and Gly90–Gly102. Residues Val211 to Lys265 are a coiled coil. Residues Asn336–Leu388 are disordered. Over residues Ser368 to Ser382 the composition is skewed to low complexity. Residues Gln387–Ser416 form a C2HC/C3H-type zinc finger. 4 residues coordinate Zn(2+): Cys391, Cys394, His406, and Cys410.

Belongs to the ZC2HC1 family. The cofactor is Zn(2+).

In Homo sapiens (Human), this protein is Zinc finger C2HC domain-containing protein 1C (ZC2HC1C).